Consider the following 101-residue polypeptide: Small ribosomal subunit protein uS14 (101 aa).

Belongs to the universal ribosomal protein uS14 family. In terms of assembly, part of the 30S ribosomal subunit. Contacts proteins S3 and S10.

Its function is as follows. Binds 16S rRNA, required for the assembly of 30S particles and may also be responsible for determining the conformation of the 16S rRNA at the A site. The polypeptide is Small ribosomal subunit protein uS14 (Escherichia coli O139:H28 (strain E24377A / ETEC)).